Consider the following 72-residue polypeptide: uncharacterized protein (72 aa).

The disordered stretch occupies residues 52–72 (KGGRQRDEAVGVEELCKQHKE). Basic and acidic residues predominate over residues 55–72 (RQRDEAVGVEELCKQHKE).

Belongs to the YiiE family.

This is an uncharacterized protein from Escherichia coli O6:H1 (strain CFT073 / ATCC 700928 / UPEC).